The following is a 72-amino-acid chain: Large ribosomal subunit protein bL31 (72 aa).

Residues C16, C18, C37, and C40 each coordinate Zn(2+).

Belongs to the bacterial ribosomal protein bL31 family. Type A subfamily. Part of the 50S ribosomal subunit. Zn(2+) is required as a cofactor.

Binds the 23S rRNA. The protein is Large ribosomal subunit protein bL31 of Hahella chejuensis (strain KCTC 2396).